Here is a 258-residue protein sequence, read N- to C-terminus: Hemin import ATP-binding protein HmuV (258 aa).

One can recognise an ABC transporter domain in the interval 2-242; sequence LTAEKLCVER…SKIEELYDFP (241 aa). 34–41 contacts ATP; it reads GANGAGKS.

It belongs to the ABC transporter superfamily. Heme (hemin) importer (TC 3.A.1.14.5) family. As to quaternary structure, the complex is composed of two ATP-binding proteins (HmuV), two transmembrane proteins (HmuU) and a solute-binding protein (HmuT).

It localises to the cell inner membrane. In terms of biological role, part of the ABC transporter complex HmuTUV involved in hemin import. Responsible for energy coupling to the transport system. This chain is Hemin import ATP-binding protein HmuV, found in Hydrogenovibrio crunogenus (strain DSM 25203 / XCL-2) (Thiomicrospira crunogena).